A 240-amino-acid chain; its full sequence is Probable transcriptional regulatory protein Adeh_2184 (240 aa).

It belongs to the TACO1 family.

Its subcellular location is the cytoplasm. The chain is Probable transcriptional regulatory protein Adeh_2184 from Anaeromyxobacter dehalogenans (strain 2CP-C).